The following is a 429-amino-acid chain: Glutamate-1-semialdehyde 2,1-aminomutase 2 (429 aa).

Position 268 is an N6-(pyridoxal phosphate)lysine (Lys-268).

It belongs to the class-III pyridoxal-phosphate-dependent aminotransferase family. HemL subfamily. In terms of assembly, homodimer. The cofactor is pyridoxal 5'-phosphate.

Its subcellular location is the cytoplasm. It carries out the reaction (S)-4-amino-5-oxopentanoate = 5-aminolevulinate. It functions in the pathway porphyrin-containing compound metabolism; protoporphyrin-IX biosynthesis; 5-aminolevulinate from L-glutamyl-tRNA(Glu): step 2/2. The sequence is that of Glutamate-1-semialdehyde 2,1-aminomutase 2 from Bacillus thuringiensis (strain Al Hakam).